The primary structure comprises 418 residues: Tyrosine--tRNA ligase (418 aa).

Tyrosine 35 lines the L-tyrosine pocket. A 'HIGH' region motif is present at residues 40 to 49 (PTAKSLHIGH). Residues tyrosine 168 and glutamine 172 each contribute to the L-tyrosine site. Residues 228 to 232 (KYGKT) carry the 'KMSKS' region motif. Lysine 231 lines the ATP pocket. The 59-residue stretch at 352-410 (PTVVGAMVAAGVVDTKSGGRRAVAEGGAYLNNVKVADPDQRLTDDDFLCGRVALVRRGK) folds into the S4 RNA-binding domain.

It belongs to the class-I aminoacyl-tRNA synthetase family. TyrS type 1 subfamily. In terms of assembly, homodimer.

The protein localises to the cytoplasm. It carries out the reaction tRNA(Tyr) + L-tyrosine + ATP = L-tyrosyl-tRNA(Tyr) + AMP + diphosphate + H(+). Functionally, catalyzes the attachment of tyrosine to tRNA(Tyr) in a two-step reaction: tyrosine is first activated by ATP to form Tyr-AMP and then transferred to the acceptor end of tRNA(Tyr). The sequence is that of Tyrosine--tRNA ligase from Cutibacterium acnes (strain DSM 16379 / KPA171202) (Propionibacterium acnes).